The primary structure comprises 331 residues: NADH-quinone oxidoreductase subunit H (331 aa).

A run of 9 helical transmembrane segments spans residues 6–26 (FFIV…ATLA), 45–65 (GPWM…IKLF), 78–98 (FIFL…MSVI), 120–140 (IGIL…LIGG), 167–187 (GLSL…DIVH), 193–213 (ITSW…IAAF), 241–261 (MRWG…SIVI), 263–283 (LIFL…MIFL), and 311–331 (CWKI…FVII).

This sequence belongs to the complex I subunit 1 family. NDH-1 is composed of 14 different subunits. Subunits NuoA, H, J, K, L, M, N constitute the membrane sector of the complex.

The protein localises to the cell inner membrane. It catalyses the reaction a quinone + NADH + 5 H(+)(in) = a quinol + NAD(+) + 4 H(+)(out). Its function is as follows. NDH-1 shuttles electrons from NADH, via FMN and iron-sulfur (Fe-S) centers, to quinones in the respiratory chain. The immediate electron acceptor for the enzyme in this species is believed to be ubiquinone. Couples the redox reaction to proton translocation (for every two electrons transferred, four hydrogen ions are translocated across the cytoplasmic membrane), and thus conserves the redox energy in a proton gradient. This subunit may bind ubiquinone. The polypeptide is NADH-quinone oxidoreductase subunit H (Campylobacter hominis (strain ATCC BAA-381 / DSM 21671 / CCUG 45161 / LMG 19568 / NCTC 13146 / CH001A)).